The sequence spans 940 residues: Protein translocase subunit SecA 1 (940 aa).

ATP contacts are provided by residues Q83, 101 to 105 (GEGKT), and D490. The disordered stretch occupies residues 856–940 (AEQGGTATAA…AKPPKSVKRR (85 aa)).

This sequence belongs to the SecA family. As to quaternary structure, monomer and homodimer. Part of the essential Sec protein translocation apparatus which comprises SecA, SecYEG and auxiliary proteins SecDF. Other proteins may also be involved.

It localises to the cell membrane. The protein localises to the cytoplasm. It carries out the reaction ATP + H2O + cellular proteinSide 1 = ADP + phosphate + cellular proteinSide 2.. Functionally, part of the Sec protein translocase complex. Interacts with the SecYEG preprotein conducting channel. Has a central role in coupling the hydrolysis of ATP to the transfer of proteins into and across the cell membrane, serving as an ATP-driven molecular motor driving the stepwise translocation of polypeptide chains across the membrane. The protein is Protein translocase subunit SecA 1 of Mycolicibacterium paratuberculosis (strain ATCC BAA-968 / K-10) (Mycobacterium paratuberculosis).